A 757-amino-acid polypeptide reads, in one-letter code: RNA-directed RNA polymerase catalytic subunit (757 aa).

The interval 52–82 (RGKWTTNTETGAPQLNPIDGPLPEDNEPSGY) is disordered. A compositionally biased stretch (polar residues) spans 55–64 (WTTNTETGAP). 2 short sequence motifs (nuclear localization signal) span residues 187 to 195 (RKRRVRDNM) and 203 to 216 (RTIG…NKRS). The tract at residues 249 to 256 (RGFVYFVE) is promoter-binding site. The region spanning 286–483 (VRKMMTNSQD…GINMSKKKSY (198 aa)) is the RdRp catalytic domain.

This sequence belongs to the influenza viruses polymerase PB1 family. Influenza RNA polymerase is composed of three subunits: PB1, PB2 and PA. Interacts (via N-terminus) with PA (via C-terminus). Interacts (via C-terminus) with PB2 (via N-terminus); this interaction is essential for transcription initiation. Phosphorylated by host PRKCA.

Its subcellular location is the host nucleus. The protein resides in the host cytoplasm. It carries out the reaction RNA(n) + a ribonucleoside 5'-triphosphate = RNA(n+1) + diphosphate. Its function is as follows. RNA-dependent RNA polymerase which is responsible for replication and transcription of virus RNA segments. The transcription of viral mRNAs occurs by a unique mechanism called cap-snatching. 5' methylated caps of cellular mRNAs are cleaved after 10-13 nucleotides by PA. In turn, these short capped RNAs are used as primers by PB1 for transcription of viral mRNAs. During virus replication, PB1 initiates RNA synthesis and copy vRNA into complementary RNA (cRNA) which in turn serves as a template for the production of more vRNAs. This Aves protein is RNA-directed RNA polymerase catalytic subunit.